We begin with the raw amino-acid sequence, 563 residues long: DEAD-box ATP-dependent RNA helicase 25 (563 aa).

The interval 21 to 57 (KKLTSDEDGSGKLVKDNNKSLKRGREGKSDVDEPLIK) is disordered. Positions 23–56 (LTSDEDGSGKLVKDNNKSLKRGREGKSDVDEPLI) are enriched in basic and acidic residues. Position 25 is a phosphoserine (serine 25). A Q motif motif is present at residues 80–108 (TRFDQFPLSPLTLKGIEDAGFKTMTVVQE). Residues 111 to 294 (LPLILQGKDI…HVALKRDHEF (184 aa)) form the Helicase ATP-binding domain. 124–131 (AKTGTGKT) lines the ATP pocket. Positions 242 to 245 (DEAD) match the DEAD box motif. A Helicase C-terminal domain is found at 328-479 (LLKKHITDNV…AVKKVQKGLI (152 aa)).

It belongs to the DEAD box helicase family.

It carries out the reaction ATP + H2O = ADP + phosphate + H(+). The sequence is that of DEAD-box ATP-dependent RNA helicase 25 (RH25) from Arabidopsis thaliana (Mouse-ear cress).